We begin with the raw amino-acid sequence, 152 residues long: SUZ RNA-binding domain-containing (152 aa).

M1 bears the N-acetylmethionine mark. 2 disordered regions span residues 30-86 (TQKE…LPVK) and 99-152 (RKRI…KQRR). 3 positions are modified to phosphoserine: S37, S39, and S51. The SUZ domain occupies 42-107 (KVPIVIQDDS…ARKRILGSAS (66 aa)). A compositionally biased stretch (polar residues) spans 66–79 (PTSNGVVSGPNSAS). Phosphoserine is present on residues S105 and S107. The SUZ-C domain occupies 111–152 (EQEKPILDRPTRISQPEDSRQPNNVIRQPLGPDGSQGFKQRR). Positions 113–130 (EKPILDRPTRISQPEDSR) are enriched in basic and acidic residues.

It belongs to the SZRD1 family.

This chain is SUZ RNA-binding domain-containing (SZRD1), found in Bos taurus (Bovine).